Here is a 78-residue protein sequence, read N- to C-terminus: Large ribosomal subunit protein bL28 (78 aa).

The protein belongs to the bacterial ribosomal protein bL28 family.

This chain is Large ribosomal subunit protein bL28, found in Prochlorococcus marinus (strain SARG / CCMP1375 / SS120).